A 214-amino-acid polypeptide reads, in one-letter code: 2-phospho-L-lactate guanylyltransferase (214 aa).

The protein belongs to the CofC family. Homodimer.

It carries out the reaction (2S)-2-phospholactate + GTP + H(+) = (2S)-lactyl-2-diphospho-5'-guanosine + diphosphate. It functions in the pathway cofactor biosynthesis; coenzyme F420 biosynthesis. In terms of biological role, guanylyltransferase that catalyzes the activation of (2S)-2-phospholactate (2-PL) as (2S)-lactyl-2-diphospho-5'-guanosine, via the condensation of 2-PL with GTP. It is involved in the biosynthesis of coenzyme F420, a hydride carrier cofactor. The sequence is that of 2-phospho-L-lactate guanylyltransferase from Methanoregula boonei (strain DSM 21154 / JCM 14090 / 6A8).